We begin with the raw amino-acid sequence, 420 residues long: Mitochondrial chaperone BCS1 (420 aa).

Topologically, residues 1–15 (MTLSDFIGALKDNPY) are mitochondrial intermembrane. Residues 16 to 32 (FGAGFGLVGVGTALAVA) form a helical membrane-spanning segment. The Mitochondrial matrix segment spans residues 33–420 (RKGAQVGMIF…AIKNIAEIKD (388 aa)). Position 230 to 237 (230 to 237 (GPPGCGKS)) interacts with ATP.

This sequence belongs to the AAA ATPase family. BCS1 subfamily.

It is found in the mitochondrion inner membrane. The catalysed reaction is ATP + H2O = ADP + phosphate + H(+). Its function is as follows. Chaperone necessary for the incorporation of Rieske iron-sulfur protein uqcrfs1 into the mitochondrial respiratory chain complex III. The polypeptide is Mitochondrial chaperone BCS1 (bcs1l) (Danio rerio (Zebrafish)).